Here is a 156-residue protein sequence, read N- to C-terminus: Small ribosomal subunit protein uS7 (156 aa).

The protein belongs to the universal ribosomal protein uS7 family. Part of the 30S ribosomal subunit. Contacts proteins S9 and S11.

One of the primary rRNA binding proteins, it binds directly to 16S rRNA where it nucleates assembly of the head domain of the 30S subunit. Is located at the subunit interface close to the decoding center, probably blocks exit of the E-site tRNA. This Geotalea daltonii (strain DSM 22248 / JCM 15807 / FRC-32) (Geobacter daltonii) protein is Small ribosomal subunit protein uS7.